The sequence spans 260 residues: Glutathione S-transferase domain-containing protein DDB_G0274223 (260 aa).

A GST N-terminal domain is found at 7 to 96; sequence KVDYIFYTNN…YLAQKYNTFL (90 aa). The GST C-terminal domain occupies 102–233; sequence NPHENSDVIT…GFKTFNPSAL (132 aa).

Belongs to the GST superfamily.

The polypeptide is Glutathione S-transferase domain-containing protein DDB_G0274223 (Dictyostelium discoideum (Social amoeba)).